A 114-amino-acid polypeptide reads, in one-letter code: Large ribosomal subunit protein bL19 (114 aa).

It belongs to the bacterial ribosomal protein bL19 family.

This protein is located at the 30S-50S ribosomal subunit interface and may play a role in the structure and function of the aminoacyl-tRNA binding site. The protein is Large ribosomal subunit protein bL19 of Lactococcus lactis subsp. lactis (strain IL1403) (Streptococcus lactis).